The following is a 429-amino-acid chain: Methylenetetrahydrofolate--tRNA-(uracil-5-)-methyltransferase TrmFO (429 aa).

G7–G12 serves as a coordination point for FAD.

Belongs to the MnmG family. TrmFO subfamily. FAD is required as a cofactor.

It localises to the cytoplasm. The catalysed reaction is uridine(54) in tRNA + (6R)-5,10-methylene-5,6,7,8-tetrahydrofolate + NADH + H(+) = 5-methyluridine(54) in tRNA + (6S)-5,6,7,8-tetrahydrofolate + NAD(+). It catalyses the reaction uridine(54) in tRNA + (6R)-5,10-methylene-5,6,7,8-tetrahydrofolate + NADPH + H(+) = 5-methyluridine(54) in tRNA + (6S)-5,6,7,8-tetrahydrofolate + NADP(+). Functionally, catalyzes the folate-dependent formation of 5-methyl-uridine at position 54 (M-5-U54) in all tRNAs. The polypeptide is Methylenetetrahydrofolate--tRNA-(uracil-5-)-methyltransferase TrmFO (Thermosipho melanesiensis (strain DSM 12029 / CIP 104789 / BI429)).